Consider the following 971-residue polypeptide: Nuclear factor NF-kappa-B p110 subunit (971 aa).

Low complexity predominate over residues 23–41; that stretch reads STSGYSSSTSPNSTNRSFS. Residues 23–46 are disordered; sequence STSGYSSSTSPNSTNRSFSPAHSP. The region spanning 147–339 is the RHD domain; that stretch reads KHVPQLRIVE…NAINNRKSAQ (193 aa). S431 is modified (phosphoserine; by PKA). A Nuclear localization signal motif is present at residues 452-457; it reads SRKRRR. A disordered region spans residues 453 to 496; that stretch reads RKRRRTGSSANSSSSGTESSNNSLDLPKTLGLAQPPNGLPNLSQ. Residues 460-475 are compositionally biased toward low complexity; it reads SSANSSSSGTESSNNS. Residue T620 is modified to Phosphothreonine. Position 626 is a phosphotyrosine (Y626). 5 ANK repeats span residues 640-669, 673-702, 710-740, 745-775, and 783-812; these read DGDS…NPNL, AGNT…TVQL, DGLT…SISV, DGNN…NLTD, and AGHT…EKGE. The tract at residues 826–877 is disordered; sequence IDSSSDESSDAGQLEIKSEEMDIETKDEDSVELDLSSGPRRQKDESSRDTEM. Positions 866 to 877 are enriched in basic and acidic residues; the sequence is RQKDESSRDTEM. The residue at position 950 (S950) is a Phosphoserine.

As to quaternary structure, rel-p68 subunit interacts with Dredd. Interacts with DMAP1. Interacts with akirin; interaction is immune stimulation-dependent; activates selected rel target gene promoters. In terms of processing, phosphorylated by lipopolysaccharide (LPS)-activated I-kappa-B kinase complex before being cleaved. Rel-p110 subunit is cleaved within seconds of an immune challenge into Rel-p49 subunit and Rel-p68 subunit. Rel-p110 subunit reappears after 45 minutes.

The protein localises to the nucleus. The protein resides in the cytoplasm. Functionally, transcription factor that plays a key role in the humoral immune response as part of the peptidoglycan recognition protein (IMD) signaling pathway. Rel-p68 subunit translocates to the nucleus where it binds to the promoter of the Cecropin A1 gene and probably other antimicrobial peptide genes. I-kappa-B kinase complex (IKKbeta and key) and PGRP-LC are essential signaling components in transmitting the lipopolysaccharide (LPS) signal leading to cact degradation for NF-kappa-B (rel) activation. Part of a Toll-related receptor pathway that functions in the apoptosis of unfit cells during cell competition. Also part of some antiviral immunity: activated downstream of Sting signaling, which detects double-stranded RNA (dsRNA) from viruses, and promotes expression of antiviral effector genes. May be part of a NF-kappa-B and Tollo signaling cascade that regulates development of the peripheral nervous system. Possibly post-transcriptionally regulates the neuron-specific genes sc and ase, by promoting the rapid turnover of their transcripts in the wing imaginal disk. The protein is Nuclear factor NF-kappa-B p110 subunit of Drosophila melanogaster (Fruit fly).